The primary structure comprises 279 residues: Movement protein (279 aa).

Positions 246–279 are disordered; sequence SESEDLNVESPPAAIGSSSASRSEAFRPQVVNGL. Residues 254–268 show a composition bias toward low complexity; sequence ESPPAAIGSSSASRS.

It belongs to the cucumovirus movement protein family.

It is found in the host cell junction. It localises to the host plasmodesma. In terms of biological role, transports viral genome to neighboring plant cells directly through plasmosdesmata, without any budding. The movement protein allows efficient cell to cell propagation, by bypassing the host cell wall barrier. Acts by forming a tubular structure at the host plasmodesmata, enlarging it enough to allow free passage of virion capsids. The protein is Movement protein of Cucurbita pepo (Vegetable marrow).